Consider the following 187-residue polypeptide: Elongation factor P (187 aa).

The protein belongs to the elongation factor P family.

It localises to the cytoplasm. It functions in the pathway protein biosynthesis; polypeptide chain elongation. Involved in peptide bond synthesis. Stimulates efficient translation and peptide-bond synthesis on native or reconstituted 70S ribosomes in vitro. Probably functions indirectly by altering the affinity of the ribosome for aminoacyl-tRNA, thus increasing their reactivity as acceptors for peptidyl transferase. This chain is Elongation factor P, found in Synechococcus sp. (strain CC9311).